The chain runs to 417 residues: Exodeoxyribonuclease 7 large subunit (417 aa).

This sequence belongs to the XseA family. Heterooligomer composed of large and small subunits.

The protein localises to the cytoplasm. It catalyses the reaction Exonucleolytic cleavage in either 5'- to 3'- or 3'- to 5'-direction to yield nucleoside 5'-phosphates.. In terms of biological role, bidirectionally degrades single-stranded DNA into large acid-insoluble oligonucleotides, which are then degraded further into small acid-soluble oligonucleotides. This is Exodeoxyribonuclease 7 large subunit from Lactococcus lactis subsp. cremoris (strain MG1363).